We begin with the raw amino-acid sequence, 296 residues long: CRISPR-associated endonuclease Cas1 2 (296 aa).

E157, H224, and D237 together coordinate Mn(2+).

Belongs to the CRISPR-associated endonuclease Cas1 family. In terms of assembly, homodimer, forms a heterotetramer with a Cas2 homodimer. It depends on Mg(2+) as a cofactor. The cofactor is Mn(2+).

In terms of biological role, CRISPR (clustered regularly interspaced short palindromic repeat), is an adaptive immune system that provides protection against mobile genetic elements (viruses, transposable elements and conjugative plasmids). CRISPR clusters contain spacers, sequences complementary to antecedent mobile elements, and target invading nucleic acids. CRISPR clusters are transcribed and processed into CRISPR RNA (crRNA). Acts as a dsDNA endonuclease. Involved in the integration of spacer DNA into the CRISPR cassette. This chain is CRISPR-associated endonuclease Cas1 2, found in Chlorobaculum tepidum (strain ATCC 49652 / DSM 12025 / NBRC 103806 / TLS) (Chlorobium tepidum).